The sequence spans 124 residues: Fluoride-specific ion channel FluC (124 aa).

The next 4 membrane-spanning stretches (helical) occupy residues 1-21 (MIALIAAVSAGGIAGTLLRFA), 37-57 (GTLAVNLVGCLLIGLLYGLFL), 69-89 (GLIVGFLGGLTTFSSFSLDTV), and 99-119 (LALGYTSISVVGGLLATWAGL). Positions 76 and 79 each coordinate Na(+).

This sequence belongs to the fluoride channel Fluc/FEX (TC 1.A.43) family.

It localises to the cell inner membrane. It carries out the reaction fluoride(in) = fluoride(out). Na(+) is not transported, but it plays an essential structural role and its presence is essential for fluoride channel function. Functionally, fluoride-specific ion channel. Important for reducing fluoride concentration in the cell, thus reducing its toxicity. The sequence is that of Fluoride-specific ion channel FluC from Pseudomonas putida (strain ATCC 700007 / DSM 6899 / JCM 31910 / BCRC 17059 / LMG 24140 / F1).